A 187-amino-acid polypeptide reads, in one-letter code: Superoxide dismutase [Cu-Zn] (187 aa).

The N-terminal stretch at 1–23 is a signal peptide; that stretch reads MMKMKTLLALAISGICAAGVANA. Residues His-80, His-82, and His-105 each coordinate Cu cation. An intrachain disulfide couples Cys-87 to Cys-183. Residues His-105, His-114, His-123, and Asp-126 each coordinate Zn(2+). His-161 contributes to the Cu cation binding site.

The protein belongs to the Cu-Zn superoxide dismutase family. Homodimer. The cofactor is Cu cation. Zn(2+) serves as cofactor.

It localises to the periplasm. The enzyme catalyses 2 superoxide + 2 H(+) = H2O2 + O2. Functionally, destroys radicals which are normally produced within the cells and which are toxic to biological systems. In terms of biological role, may confer survival advantage by accelerating dismutation of superoxide of environmental origin to hydrogen peroxide, disruptive to the normal mucociliary clearance process in the host. This Haemophilus parainfluenzae protein is Superoxide dismutase [Cu-Zn] (sodC).